Here is a 256-residue protein sequence, read N- to C-terminus: Small ribosomal subunit protein eS1 (256 aa).

The span at 1–18 shows a compositional bias: basic residues; the sequence is MAVGKNKRLSKGKKGLKK. Residues 1 to 20 are disordered; sequence MAVGKNKRLSKGKKGLKKKA. Position 2 is an N-acetylalanine; partial (alanine 2).

It belongs to the eukaryotic ribosomal protein eS1 family. Component of the small ribosomal subunit. Mature ribosomes consist of a small (40S) and a large (60S) subunit. The 40S subunit contains about 33 different proteins and 1 molecule of RNA (18S). The 60S subunit contains about 49 different proteins and 3 molecules of RNA (25S, 5.8S and 5S).

Its subcellular location is the cytoplasm. This is Small ribosomal subunit protein eS1 from Podospora anserina (strain S / ATCC MYA-4624 / DSM 980 / FGSC 10383) (Pleurage anserina).